The following is a 359-amino-acid chain: MKPSMRAKLDHLDTRLAELNSLLTSEEATKDMDAYRKLTREHSDIATVVEQFGLYKKAEADAQAAEEMRKDPEMKDFADEEQKQAQATMEELEGALQKLLLPKDVNDERNVFLEIRAGTGGDESALFAGDLLRMYTRFAERQGWKVEVVNAAESDLGGYKEVVLRLVGQSVYSRLKFESGGHRVQRVPQTETQGRIHTSACTVAVMPEADELEAVKINPAELRIDTFRASGAGGQHINKTDSAVRITHIPTGTVVECQDDRSQHRNREQAMKVLVSRIMDAREREKHQLEAQTRKSLIGSGDRSDRIRTYNFPQGRITDHRINLTLYKIDAMMDGDIDDLCNALASEHQAELLAALGDS.

Gln-235 carries the post-translational modification N5-methylglutamine.

Belongs to the prokaryotic/mitochondrial release factor family. In terms of processing, methylated by PrmC. Methylation increases the termination efficiency of RF1.

It localises to the cytoplasm. In terms of biological role, peptide chain release factor 1 directs the termination of translation in response to the peptide chain termination codons UAG and UAA. The sequence is that of Peptide chain release factor 1 from Polynucleobacter asymbioticus (strain DSM 18221 / CIP 109841 / QLW-P1DMWA-1) (Polynucleobacter necessarius subsp. asymbioticus).